Here is a 229-residue protein sequence, read N- to C-terminus: Peroxiredoxin 1 (229 aa).

The region spanning 33 to 192 (LGPKNKAPDF…AFRTLKAFQF (160 aa)) is the Thioredoxin domain. The active-site Cysteine sulfenic acid (-SOH) intermediate is C78.

Belongs to the peroxiredoxin family. AhpC/Prx1 subfamily. In terms of assembly, homodimer; disulfide-linked, upon oxidation.

It catalyses the reaction a hydroperoxide + [thioredoxin]-dithiol = an alcohol + [thioredoxin]-disulfide + H2O. Its function is as follows. Thiol-specific peroxidase that catalyzes the reduction of hydrogen peroxide and organic hydroperoxides to water and alcohols, respectively. Plays a role in cell protection against oxidative stress by detoxifying peroxides and as sensor of hydrogen peroxide-mediated signaling events. The protein is Peroxiredoxin 1 (TSA1) of Brugia malayi (Filarial nematode worm).